We begin with the raw amino-acid sequence, 205 residues long: MMGDKGEKECATASSPIELGCGEGDESGNKSSMRTVETLLRLVPVALCTVSLVVMLKNSQTNDFGSLSYSDLGAFRYLVHANGICAGYSLLSAIFTAMPRPPTMSRAWTFFLLDQVLTYLILAAGAVSTEVVYLAYKGDEAVTWSDACSSFGGFCQKTTASISITFVTVLCYAVLSLISSYKLFSKYDAPICFNGKGIEIAAFHS.

The Cytoplasmic segment spans residues 1 to 35; sequence MMGDKGEKECATASSPIELGCGEGDESGNKSSMRT. Residues 36 to 56 traverse the membrane as a helical segment; sequence VETLLRLVPVALCTVSLVVML. Residues 57–77 are Extracellular-facing; it reads KNSQTNDFGSLSYSDLGAFRY. Residues 78-98 form a helical membrane-spanning segment; that stretch reads LVHANGICAGYSLLSAIFTAM. Residues 99–106 are Cytoplasmic-facing; it reads PRPPTMSR. The helical transmembrane segment at 107–127 threads the bilayer; that stretch reads AWTFFLLDQVLTYLILAAGAV. Topologically, residues 128–157 are extracellular; the sequence is STEVVYLAYKGDEAVTWSDACSSFGGFCQK. Residues 158–178 traverse the membrane as a helical segment; the sequence is TTASISITFVTVLCYAVLSLI. Residues 179-205 lie on the Cytoplasmic side of the membrane; the sequence is SSYKLFSKYDAPICFNGKGIEIAAFHS.

Belongs to the Casparian strip membrane proteins (CASP) family. Homodimer and heterodimers.

The protein resides in the cell membrane. In Vitis vinifera (Grape), this protein is CASP-like protein 2A1.